The sequence spans 226 residues: MFTLLITGTDTDAGKTVLTTALAAYWRTYFPSQSVALLKPLQSGVGDRELYRELFALNQPPEEINPLYFQAPLAPPLAAELEQRSIDLSLPWQTLVKLRQSYDRVLVEGVGGLGSPITWELTVADLARDWGLATLLVVPVKLGAIGQAVANVALARQAGVNLKGIVLNCVQPRSETEIAQWAPADLITNLTQIPVLGVLPYLGDRTNLAQLAAAAAQLDLEAFLSA.

12-17 (DAGKTV) is a binding site for ATP. Position 16 (Thr-16) interacts with Mg(2+). Residue Lys-39 is part of the active site. A substrate-binding site is contributed by Ser-43. ATP is bound by residues Asp-47, 108-111 (EGVG), 168-169 (NC), 200-202 (PYL), and Asn-207. 2 residues coordinate Mg(2+): Asp-47 and Glu-108.

The protein belongs to the dethiobiotin synthetase family. In terms of assembly, homodimer. Mg(2+) serves as cofactor.

Its subcellular location is the cytoplasm. It carries out the reaction (7R,8S)-7,8-diammoniononanoate + CO2 + ATP = (4R,5S)-dethiobiotin + ADP + phosphate + 3 H(+). The catalysed reaction is (7R,8S)-8-amino-7-(carboxyamino)nonanoate + ATP = (4R,5S)-dethiobiotin + ADP + phosphate + H(+). It participates in cofactor biosynthesis; biotin biosynthesis; biotin from 7,8-diaminononanoate: step 1/2. In terms of biological role, catalyzes a mechanistically unusual reaction, the ATP-dependent insertion of CO2 between the N7 and N8 nitrogen atoms of 7,8-diaminopelargonic acid (DAPA, also called 7,8-diammoniononanoate) to form a ureido ring. This cyanobacterium does not encode bioA (which catalyzes the formation of the precursor for this reaction in the cannonical pathway), instead it encodes bioU, which replaces bioA and also performs the first half of the cannonical BioD reaction. Thus in this organism BioD has a different substrate. This chain is ATP-dependent dethiobiotin synthetase BioD, found in Cyanothece sp. (strain PCC 7425 / ATCC 29141).